The chain runs to 314 residues: NF-kappa-B inhibitor alpha (314 aa).

A disordered region spans residues 1–39; it reads MFQPAGHGQDWAMEGPRDGLKKERLVDDRHDSGLDSMKD. A compositionally biased stretch (basic and acidic residues) spans 15-39; the sequence is GPRDGLKKERLVDDRHDSGLDSMKD. A Glycyl lysine isopeptide (Lys-Gly) (interchain with G-Cter in SUMO); alternate cross-link involves residue K21. K21 is covalently cross-linked (Glycyl lysine isopeptide (Lys-Gly) (interchain with G-Cter in ubiquitin); alternate). K22 is covalently cross-linked (Glycyl lysine isopeptide (Lys-Gly) (interchain with G-Cter in ubiquitin)). Residues 30 to 36 carry the Destruction motif motif; the sequence is HDSGLDS. Residue S32 is modified to Phosphoserine; by IKKA and IKKB. Phosphoserine; by IKKA, IKKB, IKKE and TBK1 is present on S36. Phosphotyrosine; by Tyr-kinases is present on Y42. A Nuclear export signal motif is present at residues 45 to 54; that stretch reads MVKELREIRL. Positions 110–120 match the Nuclear import signal motif; that stretch reads LQQTPLHLAVI. ANK repeat units follow at residues 110–139, 143–172, 182–211, and 216–245; these read LQQTPLHLAVITNQPGIAEALLKAGCDPEL, RGNTPLHLACEQGCLASVAVLTQTCTPQHL, NGHTCLHLASIHGYLGIVEHLVTLGADVNA, and NGRTALHLAVDLQNPDLVSLLLKCGADVNR. (3S)-3-hydroxyasparagine; by HIF1AN occurs at positions 210 and 244. 2 positions are modified to phosphoserine; by CK2: S283 and S288. T291 bears the Phosphothreonine; by CK2 mark. Phosphoserine; by CK2 is present on S293. T296 carries the post-translational modification Phosphothreonine.

It belongs to the NF-kappa-B inhibitor family. Interacts with RELA; the interaction requires the nuclear import signal. Part of a 70-90 kDa complex at least consisting of CHUK, IKBKB, NFKBIA, RELA, ELP1 and MAP3K14. Interacts with NKIRAS1 and NKIRAS2. Interacts with RWDD3; the interaction enhances sumoylation. Interacts with PRMT2. Interacts with PRKACA in platelets; this interaction is disrupted by thrombin and collagen. Interacts with MEFV. Interacts with DDRGK1; positively regulates NFKBIA phosphorylation and degradation. Interacts with HNRNPA2B1; the interaction may be mediated by the RRM2 domain of HNRNPA2B1, and HNRNPA2B1 may interact simultaneously with FAM76B and either NFKBIA or NFKBIE to form a complex. Phosphorylated at Ser-32 and Ser-36 by IKKA/CHUK and IKKB/IKBKB; disables inhibition of NF-kappa-B DNA-binding activity. Phosphorylation at positions 32 and 36 is prerequisite to recognition by the SCF(FBXW11) and SCF(BTRC) complexes, leading to polyubiquitination and subsequent degradation. In terms of processing, polyubiquitinated at Lys-21 and/or Lys-22 following phosphorylation at Ser-32 and Ser-36. Monoubiquitinated at Lys-21 and/or Lys-22 by UBE2D3. Ubiquitin chain elongation is then performed by CDC34 in cooperation with the SCF(FBXW11) E3 ligase complex, building ubiquitin chains from the UBE2D3-primed NFKBIA-linked ubiquitin. The resulting polyubiquitination leads to protein degradation. Also ubiquitinated by the SCF(BTRC) complex following stimulus-dependent phosphorylation at Ser-32 and Ser-36. Deubiquitinated by USP38, leading to NF-kappa-B inhibition. Post-translationally, sumoylated; sumoylation requires the presence of the nuclear import signal. Sumoylation blocks ubiquitination and proteasome-mediated degradation of the protein thereby increasing the protein stability. Hydroxylated by HIF1AN.

It localises to the cytoplasm. It is found in the nucleus. Its function is as follows. Inhibits the activity of dimeric NF-kappa-B/REL complexes by trapping REL (RELA/p65 and NFKB1/p50) dimers in the cytoplasm by masking their nuclear localization signals. On cellular stimulation by immune and pro-inflammatory responses, becomes phosphorylated promoting ubiquitination and degradation, enabling the dimeric RELA to translocate to the nucleus and activate transcription. The chain is NF-kappa-B inhibitor alpha (Nfkbia) from Rattus norvegicus (Rat).